Reading from the N-terminus, the 169-residue chain is ATP synthase subunit b (169 aa).

Residues Ile11 to Phe31 traverse the membrane as a helical segment.

Belongs to the ATPase B chain family. F-type ATPases have 2 components, F(1) - the catalytic core - and F(0) - the membrane proton channel. F(1) has five subunits: alpha(3), beta(3), gamma(1), delta(1), epsilon(1). F(0) has three main subunits: a(1), b(2) and c(10-14). The alpha and beta chains form an alternating ring which encloses part of the gamma chain. F(1) is attached to F(0) by a central stalk formed by the gamma and epsilon chains, while a peripheral stalk is formed by the delta and b chains.

It is found in the cell membrane. In terms of biological role, f(1)F(0) ATP synthase produces ATP from ADP in the presence of a proton or sodium gradient. F-type ATPases consist of two structural domains, F(1) containing the extramembraneous catalytic core and F(0) containing the membrane proton channel, linked together by a central stalk and a peripheral stalk. During catalysis, ATP synthesis in the catalytic domain of F(1) is coupled via a rotary mechanism of the central stalk subunits to proton translocation. Component of the F(0) channel, it forms part of the peripheral stalk, linking F(1) to F(0). The protein is ATP synthase subunit b of Dehalococcoides mccartyi (strain ATCC BAA-2266 / KCTC 15142 / 195) (Dehalococcoides ethenogenes (strain 195)).